The primary structure comprises 425 residues: MLDQRLVRDNPETIAQQLGRRGKAVDLTKLQLIAQQQRDLEQQRSGLQAEGNRIGKEVGQRIKSGADPKGDEVAELRQQGNAIKQKVAVLEEEEKQLSSELKQQLLGFPNLPSEACPDGRSEDDNVEVRRWGTPRVDDGLYEHWQIAERLQLFDTERSVRIAQSRFVTLMGQGARLERALINFMLDLHTSKGYREVLPPVLVNSASLTGSGQLPKFAEESFRCAEDDLWLTPTAEVPVTSLHRDEIIPADQLPLRYAAYSPCFRREAGSYGRDTRGLIRLHQFNKVELYWFVHPDHSDEAHQRITADAEAVLQALELPYRVLDLCTADLGFSARRTYDLEVWLPGAGAYREISSCSVCGDFQARRSSIRTKEGKATKLVHTLNGSGLAVGRTMAALLENGQQSDGSVLLPKALVPYVGRERLQPE.

233–235 (TAE) provides a ligand contact to L-serine. Position 264 to 266 (264 to 266 (RRE)) interacts with ATP. Residue glutamate 287 participates in L-serine binding. Residue 351 to 354 (EISS) coordinates ATP. An L-serine-binding site is contributed by serine 385.

It belongs to the class-II aminoacyl-tRNA synthetase family. Type-1 seryl-tRNA synthetase subfamily. As to quaternary structure, homodimer. The tRNA molecule binds across the dimer.

The protein localises to the cytoplasm. It catalyses the reaction tRNA(Ser) + L-serine + ATP = L-seryl-tRNA(Ser) + AMP + diphosphate + H(+). The catalysed reaction is tRNA(Sec) + L-serine + ATP = L-seryl-tRNA(Sec) + AMP + diphosphate + H(+). It participates in aminoacyl-tRNA biosynthesis; selenocysteinyl-tRNA(Sec) biosynthesis; L-seryl-tRNA(Sec) from L-serine and tRNA(Sec): step 1/1. Its function is as follows. Catalyzes the attachment of serine to tRNA(Ser). Is also able to aminoacylate tRNA(Sec) with serine, to form the misacylated tRNA L-seryl-tRNA(Sec), which will be further converted into selenocysteinyl-tRNA(Sec). This Synechococcus sp. (strain CC9605) protein is Serine--tRNA ligase.